A 498-amino-acid chain; its full sequence is ATP synthase subunit beta, chloroplastic (498 aa).

172-179 is a binding site for ATP; it reads GGAGVGKT.

This sequence belongs to the ATPase alpha/beta chains family. As to quaternary structure, F-type ATPases have 2 components, CF(1) - the catalytic core - and CF(0) - the membrane proton channel. CF(1) has five subunits: alpha(3), beta(3), gamma(1), delta(1), epsilon(1). CF(0) has four main subunits: a(1), b(1), b'(1) and c(9-12).

Its subcellular location is the plastid. It localises to the chloroplast thylakoid membrane. The catalysed reaction is ATP + H2O + 4 H(+)(in) = ADP + phosphate + 5 H(+)(out). Its function is as follows. Produces ATP from ADP in the presence of a proton gradient across the membrane. The catalytic sites are hosted primarily by the beta subunits. The polypeptide is ATP synthase subunit beta, chloroplastic (Idiospermum australiense (Ribbonwood tree)).